The chain runs to 407 residues: PWWP domain-containing protein 3 (407 aa).

Residues 1–46 (MMVARTRSQKRKLEEINNQKKIKTKKKATGQQTSNTKNLRDVKKKG) are disordered. Residues 63–129 (NGEYVLAKMS…SSNVLPLTVD (67 aa)) enclose the PWWP domain. Phosphoserine is present on residues Ser160 and Ser162. The segment at 163–248 (DVEEDEFEPE…PIPSPKKTAK (86 aa)) is disordered. Residues 172–208 (ENTRKKLQKPIEKPKKEKIEATPKIDGGKRLKNEKSS) are compositionally biased toward basic and acidic residues. Ser236, Ser238, and Ser242 each carry phosphoserine.

Component of the mst2 complex composed of at least eaf6, mst2, nto1, pdp3, ptf1, ptf2 and tfg3.

It is found in the nucleus. Its function is as follows. Component of the mst2 complex which is a highly specific H3 lysine 14 (H3K14) acetyltransferase that functions together with gcn5 to regulate global levels of H3K14 acetylation (H3K14ac), critical for DNA damage checkpoint activation. This is PWWP domain-containing protein 3 (pdp3) from Schizosaccharomyces pombe (strain 972 / ATCC 24843) (Fission yeast).